Consider the following 351-residue polypeptide: Protein-glutamate methylesterase/protein-glutamine glutaminase (351 aa).

Positions 3 to 120 (KTLVVDDSAL…EISKIENELV (118 aa)) constitute a Response regulatory domain. Aspartate 54 is modified (4-aspartylphosphate). Residues 160–347 (ILIGSSTGGP…EQIVRMIEVK (188 aa)) form the CheB-type methylesterase domain. Residues serine 165, histidine 192, and aspartate 289 contribute to the active site.

The protein belongs to the CheB family. Post-translationally, phosphorylated by CheA. Phosphorylation of the N-terminal regulatory domain activates the methylesterase activity.

It localises to the cytoplasm. The catalysed reaction is [protein]-L-glutamate 5-O-methyl ester + H2O = L-glutamyl-[protein] + methanol + H(+). The enzyme catalyses L-glutaminyl-[protein] + H2O = L-glutamyl-[protein] + NH4(+). Functionally, involved in chemotaxis. Part of a chemotaxis signal transduction system that modulates chemotaxis in response to various stimuli. Catalyzes the demethylation of specific methylglutamate residues introduced into the chemoreceptors (methyl-accepting chemotaxis proteins or MCP) by CheR. Also mediates the irreversible deamidation of specific glutamine residues to glutamic acid. The sequence is that of Protein-glutamate methylesterase/protein-glutamine glutaminase from Methanococcoides burtonii (strain DSM 6242 / NBRC 107633 / OCM 468 / ACE-M).